Consider the following 309-residue polypeptide: 2-phospho-L-lactate transferase (309 aa).

Asp-50 and Lys-89 together coordinate 7,8-didemethyl-8-hydroxy-5-deazariboflavin.

This sequence belongs to the CofD family. As to quaternary structure, homodimer. It depends on Mg(2+) as a cofactor.

It catalyses the reaction (2S)-lactyl-2-diphospho-5'-guanosine + 7,8-didemethyl-8-hydroxy-5-deazariboflavin = oxidized coenzyme F420-0 + GMP + H(+). It participates in cofactor biosynthesis; coenzyme F420 biosynthesis. Functionally, catalyzes the transfer of the 2-phospholactate moiety from (2S)-lactyl-2-diphospho-5'-guanosine to 7,8-didemethyl-8-hydroxy-5-deazariboflavin (FO) with the formation of oxidized coenzyme F420-0 and GMP. The chain is 2-phospho-L-lactate transferase from Methanococcus maripaludis (strain C7 / ATCC BAA-1331).